The sequence spans 507 residues: Inositol-3-phosphate synthase (507 aa).

23 residues coordinate NAD(+): G70, G71, N72, N73, D143, I180, Q190, R193, T230, A231, N232, T233, G281, S282, D306, S309, N340, N341, D342, K355, A391, D419, and S420.

This sequence belongs to the myo-inositol 1-phosphate synthase family. NAD(+) is required as a cofactor.

Its subcellular location is the cytoplasm. It localises to the cytosol. The protein resides in the nucleus. The catalysed reaction is D-glucose 6-phosphate = 1D-myo-inositol 3-phosphate. It participates in polyol metabolism; myo-inositol biosynthesis; myo-inositol from D-glucose 6-phosphate: step 1/2. Functionally, key enzyme in myo-inositol biosynthesis pathway that catalyzes the conversion of glucose 6-phosphate to 1-myo-inositol 1-phosphate in a NAD-dependent manner. In Citrus paradisi (Grapefruit), this protein is Inositol-3-phosphate synthase.